A 305-amino-acid polypeptide reads, in one-letter code: Aspartate carbamoyltransferase catalytic subunit (305 aa).

Positions 58 and 59 each coordinate carbamoyl phosphate. Lys-86 is an L-aspartate binding site. The carbamoyl phosphate site is built by Arg-108, His-136, and Gln-139. Residues Arg-169 and Arg-223 each coordinate L-aspartate. Positions 264 and 265 each coordinate carbamoyl phosphate.

This sequence belongs to the aspartate/ornithine carbamoyltransferase superfamily. ATCase family. In terms of assembly, heterododecamer (2C3:3R2) of six catalytic PyrB chains organized as two trimers (C3), and six regulatory PyrI chains organized as three dimers (R2).

It carries out the reaction carbamoyl phosphate + L-aspartate = N-carbamoyl-L-aspartate + phosphate + H(+). The protein operates within pyrimidine metabolism; UMP biosynthesis via de novo pathway; (S)-dihydroorotate from bicarbonate: step 2/3. Catalyzes the condensation of carbamoyl phosphate and aspartate to form carbamoyl aspartate and inorganic phosphate, the committed step in the de novo pyrimidine nucleotide biosynthesis pathway. This Syntrophobacter fumaroxidans (strain DSM 10017 / MPOB) protein is Aspartate carbamoyltransferase catalytic subunit.